The following is a 189-amino-acid chain: Protein GrpE (189 aa).

Residues 1–21 form a disordered region; it reads MADEQNLDNQNPETPEQSQAD. Over residues 7-20 the composition is skewed to polar residues; that stretch reads LDNQNPETPEQSQA.

It belongs to the GrpE family. As to quaternary structure, homodimer.

Its subcellular location is the cytoplasm. Its function is as follows. Participates actively in the response to hyperosmotic and heat shock by preventing the aggregation of stress-denatured proteins, in association with DnaK and GrpE. It is the nucleotide exchange factor for DnaK and may function as a thermosensor. Unfolded proteins bind initially to DnaJ; upon interaction with the DnaJ-bound protein, DnaK hydrolyzes its bound ATP, resulting in the formation of a stable complex. GrpE releases ADP from DnaK; ATP binding to DnaK triggers the release of the substrate protein, thus completing the reaction cycle. Several rounds of ATP-dependent interactions between DnaJ, DnaK and GrpE are required for fully efficient folding. This is Protein GrpE from Stutzerimonas stutzeri (strain A1501) (Pseudomonas stutzeri).